A 343-amino-acid chain; its full sequence is Dihydroorotase (343 aa).

Residues histidine 13 and histidine 15 each contribute to the Zn(2+) site. Substrate contacts are provided by residues 15–17 and asparagine 41; that span reads HLR. Residues lysine 99, histidine 136, and histidine 174 each coordinate Zn(2+). N6-carboxylysine is present on lysine 99. Position 136 (histidine 136) interacts with substrate. Residue leucine 219 participates in substrate binding. Aspartate 247 is a Zn(2+) binding site. Aspartate 247 is an active-site residue. Residues histidine 251 and alanine 263 each coordinate substrate.

It belongs to the metallo-dependent hydrolases superfamily. DHOase family. Class II DHOase subfamily. Homodimer. Zn(2+) is required as a cofactor.

It catalyses the reaction (S)-dihydroorotate + H2O = N-carbamoyl-L-aspartate + H(+). The protein operates within pyrimidine metabolism; UMP biosynthesis via de novo pathway; (S)-dihydroorotate from bicarbonate: step 3/3. Catalyzes the reversible cyclization of carbamoyl aspartate to dihydroorotate. This Shewanella sp. (strain ANA-3) protein is Dihydroorotase.